The chain runs to 295 residues: Multistep phosphorelay regulator 1 (295 aa).

A disordered region spans residues 89–110 (KSENNQQLAANETAGAPEGTEE). Low complexity predominate over residues 97 to 106 (AANETAGAPE). An HPt domain is found at 182–284 (EHEFSKSIVW…NDFYKDARAY (103 aa)). H221 is modified (phosphohistidine).

Binds to the msc4 response regulator which is part of a multistep phosphorelay system that transmits oxidative stress signals to the spc1 MAPK cascade. In Schizosaccharomyces pombe (strain 972 / ATCC 24843) (Fission yeast), this protein is Multistep phosphorelay regulator 1 (mpr1).